The sequence spans 143 residues: Heat shock protein Hsp-16.41 (143 aa).

Residues histidine 35–valine 140 enclose the sHSP domain.

Belongs to the small heat shock protein (HSP20) family.

This chain is Heat shock protein Hsp-16.41 (hsp-16.41), found in Caenorhabditis elegans.